The sequence spans 61 residues: Small ribosomal subunit protein uS14 (61 aa).

Cys24, Cys27, Cys40, and Cys43 together coordinate Zn(2+).

The protein belongs to the universal ribosomal protein uS14 family. Zinc-binding uS14 subfamily. Part of the 30S ribosomal subunit. Contacts proteins S3 and S10. Zn(2+) serves as cofactor.

Its function is as follows. Binds 16S rRNA, required for the assembly of 30S particles and may also be responsible for determining the conformation of the 16S rRNA at the A site. The sequence is that of Small ribosomal subunit protein uS14 from Acetivibrio thermocellus (strain ATCC 27405 / DSM 1237 / JCM 9322 / NBRC 103400 / NCIMB 10682 / NRRL B-4536 / VPI 7372) (Clostridium thermocellum).